The sequence spans 392 residues: Probable nucleoredoxin 3 (392 aa).

2 Thioredoxin domains span residues 17–171 (LYSI…DSKR) and 177–326 (EKLL…ELKA).

Belongs to the nucleoredoxin family.

It catalyses the reaction [protein]-dithiol + NAD(+) = [protein]-disulfide + NADH + H(+). It carries out the reaction [protein]-dithiol + NADP(+) = [protein]-disulfide + NADPH + H(+). Probable thiol-disulfide oxidoreductase that may participate in various redox reactions. The chain is Probable nucleoredoxin 3 from Arabidopsis thaliana (Mouse-ear cress).